The chain runs to 449 residues: MREIVHIQAGQCGNQIGAKFWEVISDEHGIDPSGNYVGDSDLQLERISVYYNEASSHKYVPRAILVDLEPGTMDSVRSGAFGHLFRPDNFIFGQSGAGNNWAKGHYTEGAELVDSVLDVVRKECENCDCLQGFQLTHSLGGGTGSGMGTLLISKVREEYPDRIMNTFSVVPSPKVSDTVVEPYNATLSIHQLVENTDETYCIDNEALYDICFRTLKLATPTYGDLNHLVSATMSGVTTSLRFPGQLNADLRKLAVNMVPFPRLHFFMPGFAPLTRRGSQQYRALTVPELTQQMFDAKNMMAACDPRHGRYLTVATVFRGRMSMKEVDEQMLAIQSKNSSYFVEWIPNNVKVAVCDIPPRGLKMSSTFIGNSTAIQELFKRISEQFTAMFRRKAFLHWYTGEGMDEMEFTEAESNMNDLVSEYQQYQDATAEEEGEMYEDDEEESEQGAK.

An MREI motif motif is present at residues methionine 1–isoleucine 4. Residues glutamine 11, glutamate 69, serine 138, glycine 142, threonine 143, glycine 144, asparagine 204, and asparagine 226 each coordinate GTP. Glutamate 69 provides a ligand contact to Mg(2+). A disordered region spans residues glutamate 421–lysine 449. The segment covering threonine 429–lysine 449 has biased composition (acidic residues). At glutamate 438 the chain carries 5-glutamyl polyglutamate. Serine 444 bears the Phosphoserine mark.

This sequence belongs to the tubulin family. Dimer of alpha and beta chains. A typical microtubule is a hollow water-filled tube with an outer diameter of 25 nm and an inner diameter of 15 nM. Alpha-beta heterodimers associate head-to-tail to form protofilaments running lengthwise along the microtubule wall with the beta-tubulin subunit facing the microtubule plus end conferring a structural polarity. Microtubules usually have 13 protofilaments but different protofilament numbers can be found in some organisms and specialized cells. Requires Mg(2+) as cofactor. In terms of processing, some glutamate residues at the C-terminus are polyglycylated, resulting in polyglycine chains on the gamma-carboxyl group. Glycylation is mainly limited to tubulin incorporated into axonemes (cilia and flagella) whereas glutamylation is prevalent in neuronal cells, centrioles, axonemes, and the mitotic spindle. Both modifications can coexist on the same protein on adjacent residues, and lowering polyglycylation levels increases polyglutamylation, and reciprocally. The precise function of polyglycylation is still unclear. Post-translationally, some glutamate residues at the C-terminus are polyglutamylated, resulting in polyglutamate chains on the gamma-carboxyl group. Polyglutamylation plays a key role in microtubule severing by spastin (SPAST). SPAST preferentially recognizes and acts on microtubules decorated with short polyglutamate tails: severing activity by SPAST increases as the number of glutamates per tubulin rises from one to eight, but decreases beyond this glutamylation threshold. In terms of tissue distribution, neuron specific.

The protein resides in the cytoplasm. It localises to the cytoskeleton. In terms of biological role, tubulin is the major constituent of microtubules, a cylinder consisting of laterally associated linear protofilaments composed of alpha- and beta-tubulin heterodimers. Microtubules grow by the addition of GTP-tubulin dimers to the microtubule end, where a stabilizing cap forms. Below the cap, tubulin dimers are in GDP-bound state, owing to GTPase activity of alpha-tubulin. This is Tubulin beta-4 chain from Gallus gallus (Chicken).